Consider the following 386-residue polypeptide: Formate-dependent phosphoribosylglycinamide formyltransferase (386 aa).

N(1)-(5-phospho-beta-D-ribosyl)glycinamide contacts are provided by residues 15–16 and E75; that span reads EL. Residues R107, K148, 153–158, 188–191, and E196 contribute to the ATP site; these read SSGKGQ and EQFI. The region spanning 112–301 is the ATP-grasp domain; the sequence is ALAVQQLNLQ…EFELHLRAIV (190 aa). 2 residues coordinate Mg(2+): E260 and E272. Residues D279, K349, and 356 to 357 each bind N(1)-(5-phospho-beta-D-ribosyl)glycinamide; that span reads RR.

The protein belongs to the PurK/PurT family. In terms of assembly, homodimer.

The catalysed reaction is N(1)-(5-phospho-beta-D-ribosyl)glycinamide + formate + ATP = N(2)-formyl-N(1)-(5-phospho-beta-D-ribosyl)glycinamide + ADP + phosphate + H(+). The protein operates within purine metabolism; IMP biosynthesis via de novo pathway; N(2)-formyl-N(1)-(5-phospho-D-ribosyl)glycinamide from N(1)-(5-phospho-D-ribosyl)glycinamide (formate route): step 1/1. Its function is as follows. Involved in the de novo purine biosynthesis. Catalyzes the transfer of formate to 5-phospho-ribosyl-glycinamide (GAR), producing 5-phospho-ribosyl-N-formylglycinamide (FGAR). Formate is provided by PurU via hydrolysis of 10-formyl-tetrahydrofolate. This is Formate-dependent phosphoribosylglycinamide formyltransferase from Francisella tularensis subsp. holarctica (strain LVS).